Consider the following 126-residue polypeptide: Histone H2B type F-S (126 aa).

The span at methionine 1–lysine 12 shows a compositional bias: low complexity. The interval methionine 1–glutamate 36 is disordered. The residue at position 2 (proline 2) is an N-acetylproline. Glutamate 3 is modified (ADP-ribosyl glutamic acid). N6-(2-hydroxyisobutyryl)lysine; alternate is present on lysine 6. Lysine 6 carries the N6-(beta-hydroxybutyryl)lysine; alternate modification. Lysine 6 bears the N6-acetyllysine; alternate mark. Lysine 6 is subject to N6-butyryllysine; alternate. N6-crotonyllysine; alternate is present on lysine 6. Lysine 6 bears the N6-lactoyllysine; alternate mark. A Glycyl lysine isopeptide (Lys-Gly) (interchain with G-Cter in SUMO2); alternate cross-link involves residue lysine 6. Serine 7 is subject to ADP-ribosylserine. At lysine 12 the chain carries N6-(beta-hydroxybutyryl)lysine; alternate. Lysine 12 and lysine 13 each carry N6-acetyllysine; alternate. An N6-crotonyllysine; alternate mark is found at lysine 12 and lysine 13. Position 12 is an N6-lactoyllysine; alternate (lysine 12). Lysine 13 carries the N6-(2-hydroxyisobutyryl)lysine; alternate modification. Serine 15 carries the phosphoserine; by STK4/MST1 modification. Lysine 16, lysine 17, lysine 21, and lysine 24 each carry N6-acetyllysine; alternate. Residues lysine 16, lysine 17, lysine 21, and lysine 24 each carry the N6-crotonyllysine; alternate modification. 4 positions are modified to N6-lactoyllysine; alternate: lysine 16, lysine 17, lysine 21, and lysine 24. Residues lysine 17 and lysine 21 each carry the N6-(beta-hydroxybutyryl)lysine; alternate modification. Lysine 17 carries the N6-glutaryllysine; alternate modification. An N6-(2-hydroxyisobutyryl)lysine; alternate mark is found at lysine 21 and lysine 24. At lysine 21 the chain carries N6-butyryllysine; alternate. Residue lysine 21 forms a Glycyl lysine isopeptide (Lys-Gly) (interchain with G-Cter in SUMO2); alternate linkage. N6-(2-hydroxyisobutyryl)lysine is present on lysine 25. N6-(2-hydroxyisobutyryl)lysine; alternate is present on lysine 35. Lysine 35 carries the N6-(beta-hydroxybutyryl)lysine; alternate modification. Lysine 35 is subject to N6-crotonyllysine; alternate. Residue lysine 35 is modified to N6-glutaryllysine; alternate. Lysine 35 bears the N6-succinyllysine; alternate mark. Lysine 35 participates in a covalent cross-link: Glycyl lysine isopeptide (Lys-Gly) (interchain with G-Cter in ubiquitin); alternate. Glutamate 36 bears the PolyADP-ribosyl glutamic acid mark. Residue serine 37 is modified to Phosphoserine; by AMPK. Lysine 44, lysine 47, and lysine 58 each carry N6-(2-hydroxyisobutyryl)lysine; alternate. N6-lactoyllysine; alternate is present on lysine 44. 2 positions are modified to N6-glutaryllysine; alternate: lysine 44 and lysine 47. Residue lysine 47 is modified to N6-methyllysine; alternate. The residue at position 58 (lysine 58) is an N6,N6-dimethyllysine; alternate. Dimethylated arginine is present on arginine 80. Lysine 86 carries the post-translational modification N6-(2-hydroxyisobutyryl)lysine; alternate. The residue at position 86 (lysine 86) is an N6-(beta-hydroxybutyryl)lysine; alternate. Lysine 86 bears the N6-acetyllysine; alternate mark. Lysine 86 is subject to N6-lactoyllysine; alternate. An N6,N6,N6-trimethyllysine; alternate modification is found at lysine 86. An omega-N-methylarginine mark is found at arginine 87 and arginine 93. Residue lysine 109 is modified to N6-(2-hydroxyisobutyryl)lysine; alternate. An N6-lactoyllysine; alternate modification is found at lysine 109. Lysine 109 is subject to N6-glutaryllysine; alternate. Lysine 109 carries the N6-methyllysine; alternate modification. An O-linked (GlcNAc) serine glycan is attached at serine 113. Threonine 116 carries the post-translational modification Phosphothreonine. 2 positions are modified to N6-(2-hydroxyisobutyryl)lysine; alternate: lysine 117 and lysine 121. N6-(beta-hydroxybutyryl)lysine; alternate is present on residues lysine 117 and lysine 121. N6-lactoyllysine; alternate is present on residues lysine 117 and lysine 121. Lysine 117 and lysine 121 each carry N6-glutaryllysine; alternate. N6-succinyllysine; alternate is present on residues lysine 117 and lysine 121. An N6-malonyllysine; alternate modification is found at lysine 117. Residue lysine 117 is modified to N6-methylated lysine; alternate. Lysine 121 participates in a covalent cross-link: Glycyl lysine isopeptide (Lys-Gly) (interchain with G-Cter in ubiquitin); alternate.

Belongs to the histone H2B family. As to quaternary structure, the nucleosome is a histone octamer containing two molecules each of H2A, H2B, H3 and H4 assembled in one H3-H4 heterotetramer and two H2A-H2B heterodimers. The octamer wraps approximately 147 bp of DNA. Monoubiquitination at Lys-35 (H2BK34Ub) by the MSL1/MSL2 dimer is required for histone H3 'Lys-4' (H3K4me) and 'Lys-79' (H3K79me) methylation and transcription activation at specific gene loci, such as HOXA9 and MEIS1 loci. Similarly, monoubiquitination at Lys-121 (H2BK120Ub) by the RNF20/40 complex gives a specific tag for epigenetic transcriptional activation and is also prerequisite for histone H3 'Lys-4' and 'Lys-79' methylation. It also functions cooperatively with the FACT dimer to stimulate elongation by RNA polymerase II. H2BK120Ub also acts as a regulator of mRNA splicing: deubiquitination by USP49 is required for efficient cotranscriptional splicing of a large set of exons. In terms of processing, phosphorylation at Ser-37 (H2BS36ph) by AMPK in response to stress promotes transcription. Phosphorylated on Ser-15 (H2BS14ph) by STK4/MST1 during apoptosis; which facilitates apoptotic chromatin condensation. Also phosphorylated on Ser-15 in response to DNA double strand breaks (DSBs), and in correlation with somatic hypermutation and immunoglobulin class-switch recombination. Post-translationally, glcNAcylation at Ser-113 promotes monoubiquitination of Lys-121. It fluctuates in response to extracellular glucose, and associates with transcribed genes. ADP-ribosylated by PARP1 or PARP2 on Ser-7 (H2BS6ADPr) in response to DNA damage. H2BS6ADPr promotes recruitment of CHD1L. Mono-ADP-ribosylated on Glu-3 (H2BE2ADPr) by PARP3 in response to single-strand breaks. Poly ADP-ribosylation on Glu-36 (H2BE35ADPr) by PARP1 regulates adipogenesis: it inhibits phosphorylation at Ser-37 (H2BS36ph), thereby blocking expression of pro-adipogenetic genes. In terms of processing, crotonylation (Kcr) is specifically present in male germ cells and marks testis-specific genes in post-meiotic cells, including X-linked genes that escape sex chromosome inactivation in haploid cells. Crotonylation marks active promoters and enhancers and confers resistance to transcriptional repressors. It is also associated with post-meiotically activated genes on autosomes. Post-translationally, lactylated in macrophages by EP300/P300 by using lactoyl-CoA directly derived from endogenous or exogenous lactate, leading to stimulates gene transcription.

Its subcellular location is the nucleus. The protein resides in the chromosome. Core component of nucleosome. Nucleosomes wrap and compact DNA into chromatin, limiting DNA accessibility to the cellular machineries which require DNA as a template. Histones thereby play a central role in transcription regulation, DNA repair, DNA replication and chromosomal stability. DNA accessibility is regulated via a complex set of post-translational modifications of histones, also called histone code, and nucleosome remodeling. Its function is as follows. Has broad antibacterial activity. May contribute to the formation of the functional antimicrobial barrier of the colonic epithelium, and to the bactericidal activity of amniotic fluid. This is Histone H2B type F-S from Homo sapiens (Human).